A 290-amino-acid chain; its full sequence is Acetyl-coenzyme A carboxylase carboxyl transferase subunit beta (290 aa).

Residues 28 to 290 enclose the CoA carboxyltransferase N-terminal domain; sequence VMTKCPQCKK…KGGEEGWWRN (263 aa). Zn(2+) contacts are provided by Cys-32, Cys-35, Cys-51, and Cys-54. A C4-type zinc finger spans residues 32 to 54; it reads CPQCKKIMYTKELIKNLRVCLSC.

The protein belongs to the AccD/PCCB family. As to quaternary structure, acetyl-CoA carboxylase is a heterohexamer composed of biotin carboxyl carrier protein (AccB), biotin carboxylase (AccC) and two subunits each of ACCase subunit alpha (AccA) and ACCase subunit beta (AccD). Zn(2+) serves as cofactor.

The protein localises to the cytoplasm. It carries out the reaction N(6)-carboxybiotinyl-L-lysyl-[protein] + acetyl-CoA = N(6)-biotinyl-L-lysyl-[protein] + malonyl-CoA. It functions in the pathway lipid metabolism; malonyl-CoA biosynthesis; malonyl-CoA from acetyl-CoA: step 1/1. Its function is as follows. Component of the acetyl coenzyme A carboxylase (ACC) complex. Biotin carboxylase (BC) catalyzes the carboxylation of biotin on its carrier protein (BCCP) and then the CO(2) group is transferred by the transcarboxylase to acetyl-CoA to form malonyl-CoA. This is Acetyl-coenzyme A carboxylase carboxyl transferase subunit beta from Geobacillus kaustophilus (strain HTA426).